A 98-amino-acid chain; its full sequence is NADH-ubiquinone oxidoreductase chain 4L (98 aa).

3 helical membrane passes run 1-21 (MSLI…GLLM), 29-49 (SLLC…MMVL), and 61-81 (IILL…LVMI).

Belongs to the complex I subunit 4L family. In terms of assembly, core subunit of respiratory chain NADH dehydrogenase (Complex I) which is composed of 45 different subunits.

The protein localises to the mitochondrion inner membrane. It carries out the reaction a ubiquinone + NADH + 5 H(+)(in) = a ubiquinol + NAD(+) + 4 H(+)(out). Functionally, core subunit of the mitochondrial membrane respiratory chain NADH dehydrogenase (Complex I) which catalyzes electron transfer from NADH through the respiratory chain, using ubiquinone as an electron acceptor. Part of the enzyme membrane arm which is embedded in the lipid bilayer and involved in proton translocation. The sequence is that of NADH-ubiquinone oxidoreductase chain 4L (MT-ND4L) from Ceratotherium simum (White rhinoceros).